Consider the following 572-residue polypeptide: Hemagglutinin-neuraminidase (572 aa).

At 1 to 31 (MEYWKHTNHRKDAGNELETSMATHGNKLTNK) the chain is on the intravirion side. Residues 32–52 (ITYILWTIILVLLSIVLIIVL) traverse the membrane as a helical segment. Topologically, residues 53 to 572 (INSIKSEKAH…FKTEVPKSCS (520 aa)) are virion surface. Cystine bridges form between C190–C214 and C256–C269. Residues 252–257 (NRKSCS) are involved in neuraminidase activity. Residues N308 and N351 are each glycosylated (N-linked (GlcNAc...) asparagine; by host). 2 disulfide bridges follow: C355-C469 and C463-C473. N-linked (GlcNAc...) asparagine; by host glycosylation is present at N523. An intrachain disulfide couples C535 to C544.

This sequence belongs to the paramyxoviruses hemagglutinin-neuraminidase family. As to quaternary structure, homotetramer; composed of disulfide-linked homodimers. Interacts with F protein trimer.

It is found in the virion membrane. Its subcellular location is the host cell membrane. The catalysed reaction is Hydrolysis of alpha-(2-&gt;3)-, alpha-(2-&gt;6)-, alpha-(2-&gt;8)- glycosidic linkages of terminal sialic acid residues in oligosaccharides, glycoproteins, glycolipids, colominic acid and synthetic substrates.. Attaches the virus to sialic acid-containing cell receptors and thereby initiating infection. Binding of HN protein to the receptor induces a conformational change that allows the F protein to trigger virion/cell membranes fusion. Functionally, neuraminidase activity ensures the efficient spread of the virus by dissociating the mature virions from the neuraminic acid containing glycoproteins. This Human parainfluenza 3 virus (strain Tex/9305/82) (HPIV-3) protein is Hemagglutinin-neuraminidase (HN).